We begin with the raw amino-acid sequence, 483 residues long: Glutamate--tRNA ligase (483 aa).

Residues 9–19 (PSPTGFLHIGN) carry the 'HIGH' region motif. The 'KMSKS' region signature appears at 253–257 (KLSKR). ATP is bound at residue Lys-256.

This sequence belongs to the class-I aminoacyl-tRNA synthetase family. Glutamate--tRNA ligase type 1 subfamily. In terms of assembly, monomer.

The protein resides in the cytoplasm. The enzyme catalyses tRNA(Glu) + L-glutamate + ATP = L-glutamyl-tRNA(Glu) + AMP + diphosphate. Catalyzes the attachment of glutamate to tRNA(Glu) in a two-step reaction: glutamate is first activated by ATP to form Glu-AMP and then transferred to the acceptor end of tRNA(Glu). This is Glutamate--tRNA ligase from Mycoplasma capricolum subsp. capricolum (strain California kid / ATCC 27343 / NCTC 10154).